Consider the following 291-residue polypeptide: Succinate--CoA ligase [ADP-forming] subunit alpha 1 (291 aa).

Residues 20–23 (TGFQ), Lys-46, and 99–101 (VTE) contribute to the CoA site. Residue Tyr-162 participates in substrate binding. The Tele-phosphohistidine intermediate role is filled by His-249.

Belongs to the succinate/malate CoA ligase alpha subunit family. As to quaternary structure, heterotetramer of two alpha and two beta subunits.

The catalysed reaction is succinate + ATP + CoA = succinyl-CoA + ADP + phosphate. The enzyme catalyses GTP + succinate + CoA = succinyl-CoA + GDP + phosphate. It participates in carbohydrate metabolism; tricarboxylic acid cycle; succinate from succinyl-CoA (ligase route): step 1/1. Its function is as follows. Succinyl-CoA synthetase functions in the citric acid cycle (TCA), coupling the hydrolysis of succinyl-CoA to the synthesis of either ATP or GTP and thus represents the only step of substrate-level phosphorylation in the TCA. The alpha subunit of the enzyme binds the substrates coenzyme A and phosphate, while succinate binding and nucleotide specificity is provided by the beta subunit. In Archaeoglobus fulgidus (strain ATCC 49558 / DSM 4304 / JCM 9628 / NBRC 100126 / VC-16), this protein is Succinate--CoA ligase [ADP-forming] subunit alpha 1.